A 160-amino-acid chain; its full sequence is Large ribosomal subunit protein uL11 (160 aa).

Belongs to the universal ribosomal protein uL11 family. In terms of assembly, part of the ribosomal stalk of the 50S ribosomal subunit. Interacts with L10 and the large rRNA to form the base of the stalk. L10 forms an elongated spine to which L12 dimers bind in a sequential fashion forming a multimeric L10(L12)X complex.

Its function is as follows. Forms part of the ribosomal stalk which helps the ribosome interact with GTP-bound translation factors. This Nanoarchaeum equitans (strain Kin4-M) protein is Large ribosomal subunit protein uL11.